A 127-amino-acid polypeptide reads, in one-letter code: MPSSFPEYISNLNPKPLSTKEQIDHNQAAFCIMKDLNYIDNHLVALKQLQQAEQIAIGQTDSNFLSYINAMIGRSYQQLGLFDNAIQQFQDSIENSFEAKQYYNVENSYKELVTAHQPQGTLAKLKN.

This is an uncharacterized protein from Rickettsia conorii (strain ATCC VR-613 / Malish 7).